The following is a 627-amino-acid chain: 1-deoxy-D-xylulose-5-phosphate synthase (627 aa).

Thiamine diphosphate-binding positions include His74 and 115–117 (GHA). Asp146 is a binding site for Mg(2+). Thiamine diphosphate-binding positions include 147-148 (AA), Asn175, Phe284, and Glu364. Asn175 is a binding site for Mg(2+).

The protein belongs to the transketolase family. DXPS subfamily. Homodimer. The cofactor is Mg(2+). Thiamine diphosphate serves as cofactor.

It catalyses the reaction D-glyceraldehyde 3-phosphate + pyruvate + H(+) = 1-deoxy-D-xylulose 5-phosphate + CO2. The protein operates within metabolic intermediate biosynthesis; 1-deoxy-D-xylulose 5-phosphate biosynthesis; 1-deoxy-D-xylulose 5-phosphate from D-glyceraldehyde 3-phosphate and pyruvate: step 1/1. In terms of biological role, catalyzes the acyloin condensation reaction between C atoms 2 and 3 of pyruvate and glyceraldehyde 3-phosphate to yield 1-deoxy-D-xylulose-5-phosphate (DXP). This Acidobacterium capsulatum (strain ATCC 51196 / DSM 11244 / BCRC 80197 / JCM 7670 / NBRC 15755 / NCIMB 13165 / 161) protein is 1-deoxy-D-xylulose-5-phosphate synthase.